The primary structure comprises 227 residues: Ribose-5-phosphate isomerase A (227 aa).

Substrate-binding positions include 28 to 31 (TGST), 81 to 84 (DGAD), and 94 to 97 (KGGG). Glu103 functions as the Proton acceptor in the catalytic mechanism. Lys121 serves as a coordination point for substrate.

This sequence belongs to the ribose 5-phosphate isomerase family. As to quaternary structure, homodimer.

It catalyses the reaction aldehydo-D-ribose 5-phosphate = D-ribulose 5-phosphate. It participates in carbohydrate degradation; pentose phosphate pathway; D-ribose 5-phosphate from D-ribulose 5-phosphate (non-oxidative stage): step 1/1. Its function is as follows. Catalyzes the reversible conversion of ribose-5-phosphate to ribulose 5-phosphate. The chain is Ribose-5-phosphate isomerase A from Caulobacter vibrioides (strain ATCC 19089 / CIP 103742 / CB 15) (Caulobacter crescentus).